Consider the following 133-residue polypeptide: MAYSSCLNRSLKPNKLLLRRIDGAIQVRSHVDLTFYSLVGSGRSGGGTTAPLFSRIHTSLISVWRAISRAQVEVRPQWENGAPNNASSQTKNYEITLSFWGDGGIVPFEPFFHAFPGGLEKAAINRTSLILPS.

Belongs to the ycf68 family.

It is found in the plastid. It localises to the chloroplast. This is an uncharacterized protein from Oryza sativa subsp. japonica (Rice).